We begin with the raw amino-acid sequence, 286 residues long: Phosphate import ATP-binding protein PstB (286 aa).

Residues 40–281 form the ABC transporter domain; it reads VVAKDFSIFY…PRDRMTEDYI (242 aa). Residue 72-79 participates in ATP binding; that stretch reads GPSGCGKS.

This sequence belongs to the ABC transporter superfamily. Phosphate importer (TC 3.A.1.7) family. In terms of assembly, the complex is composed of two ATP-binding proteins (PstB), two transmembrane proteins (PstC and PstA) and a solute-binding protein (PstS).

The protein resides in the cell inner membrane. The enzyme catalyses phosphate(out) + ATP + H2O = ADP + 2 phosphate(in) + H(+). In terms of biological role, part of the ABC transporter complex PstSACB involved in phosphate import. Responsible for energy coupling to the transport system. This Chlorobium luteolum (strain DSM 273 / BCRC 81028 / 2530) (Pelodictyon luteolum) protein is Phosphate import ATP-binding protein PstB.